We begin with the raw amino-acid sequence, 407 residues long: Zinc finger protein 260 (407 aa).

Disordered regions lie at residues 1-21 (MLESLQPESHLLHDEPDPGES), 39-72 (VEHKKTHSGEKSPECTGCGEESSQASSLTLHLRS), and 96-124 (SHQKQHTEERPSESKKTPVPMTTTVRNQR). The C2H2-type 1 zinc finger occupies 23–45 (YECNECKETFSLEQNFVEHKKTH). Basic and acidic residues-rich tracts occupy residues 39-51 (VEHKKTHSGEKSP) and 100-111 (QHTEERPSESKK). The segment at 51–73 (PECTGCGEESSQASSLTLHLRSR) adopts a C2H2-type 2; degenerate zinc-finger fold. The C2H2-type 3 zinc finger occupies 79–101 (YKCGECGKAFSQRGNFLSHQKQH). A compositionally biased stretch (polar residues) spans 115–124 (PMTTTVRNQR). 10 consecutive C2H2-type zinc fingers follow at residues 131–153 (YACKECGKAFNGKSYLKEHEKIH), 159–181 (FECSQCGRAFSQKQYLIKHQNIH), 187–209 (FKCNECGKAFSQKENLIIHQRIH), 215–237 (YECKGCGKAFIQKSSLIRHQRSH), 243–265 (YTCKECGKAFSGKSNLTEHEKIH), 271–293 (YKCNECGTIFRQKQYLIKHHNIH), 299–321 (YECNKCGKAFSRITSLIVHVRIH), 327–349 (YECKICGKAFCQSSSLTVHMRSH), 355–377 (YGCNECGKAFSQFSTLALHMRIH), and 383–405 (YQCSECGKAFSQKSHHIRHQRIH).

The protein belongs to the krueppel C2H2-type zinc-finger protein family. Binds DNA. Interacts with GATA4. As to expression, predominantly present in heart. Outside the heart, it is detected in embryonic and postnatal vascular smooth muscle cells and in epithelial cells of the lung, gut and kidney at sites of epithelial morphogenesis and in the spinal cord (at protein level).

It is found in the nucleus. Functionally, transcription factor that acts as a cardiac regulator and an effector of alpha1-adrenergic signaling. Binds to PE response elements (PERE) present in the promoter of genes such as ANF/NPPA and acts as a direct transcriptional activator of NPPA. Also acts as a cofactor with GATA4, a key cardiac regulator. The polypeptide is Zinc finger protein 260 (Znf260) (Mus musculus (Mouse)).